The following is a 759-amino-acid chain: Phosphoribosylformylglycinamidine synthase subunit PurL (759 aa).

His46 is an active-site residue. ATP contacts are provided by Tyr49 and Lys88. Glu90 serves as a coordination point for Mg(2+). Substrate-binding positions include 91–94 and Arg113; that span reads SHNH. His92 acts as the Proton acceptor in catalysis. Position 114 (Asp114) interacts with Mg(2+). Residue Gln237 participates in substrate binding. Asp265 is a Mg(2+) binding site. 309 to 311 is a substrate binding site; sequence ESQ. Positions 498 and 535 each coordinate ATP. Asn536 is a binding site for Mg(2+). Ser538 contributes to the substrate binding site.

Belongs to the FGAMS family. Monomer. Part of the FGAM synthase complex composed of 1 PurL, 1 PurQ and 2 PurS subunits.

Its subcellular location is the cytoplasm. It carries out the reaction N(2)-formyl-N(1)-(5-phospho-beta-D-ribosyl)glycinamide + L-glutamine + ATP + H2O = 2-formamido-N(1)-(5-O-phospho-beta-D-ribosyl)acetamidine + L-glutamate + ADP + phosphate + H(+). It participates in purine metabolism; IMP biosynthesis via de novo pathway; 5-amino-1-(5-phospho-D-ribosyl)imidazole from N(2)-formyl-N(1)-(5-phospho-D-ribosyl)glycinamide: step 1/2. In terms of biological role, part of the phosphoribosylformylglycinamidine synthase complex involved in the purines biosynthetic pathway. Catalyzes the ATP-dependent conversion of formylglycinamide ribonucleotide (FGAR) and glutamine to yield formylglycinamidine ribonucleotide (FGAM) and glutamate. The FGAM synthase complex is composed of three subunits. PurQ produces an ammonia molecule by converting glutamine to glutamate. PurL transfers the ammonia molecule to FGAR to form FGAM in an ATP-dependent manner. PurS interacts with PurQ and PurL and is thought to assist in the transfer of the ammonia molecule from PurQ to PurL. This chain is Phosphoribosylformylglycinamidine synthase subunit PurL, found in Anaeromyxobacter dehalogenans (strain 2CP-C).